A 159-amino-acid chain; its full sequence is MLLTWLHHPILNSRIKLLSVRYLSLTAYMLLAICPIAVRLLELEDYDKRCRCNNQILLNTLPVGTELLKPIAASESCNRQEVLAILKDKGTKCLNPNAQAVRRHINRLFFRLVLDEEQRIYDVVSTNIEFGAWPVPTAYKAFLWKYAKKLNYHYFRLRW.

Intrachain disulfides connect C50–C77 and C52–C93.

This sequence belongs to the intercrine alpha (chemokine CxC) family.

The protein is Putative viral CXC chemokine 2 (UL147) of Human cytomegalovirus (strain Merlin) (HHV-5).